A 735-amino-acid polypeptide reads, in one-letter code: Phosphoribosylformylglycinamidine synthase subunit PurL (735 aa).

H49 is a catalytic residue. Positions 52 and 91 each coordinate ATP. E93 is a Mg(2+) binding site. Substrate is bound by residues 94 to 97 and R116; that span reads SHNH. Catalysis depends on H95, which acts as the Proton acceptor. D117 lines the Mg(2+) pocket. Substrate is bound at residue Q240. D268 contacts Mg(2+). A substrate-binding site is contributed by 312 to 314; it reads ESQ. ATP contacts are provided by D493 and G530. N531 contributes to the Mg(2+) binding site. S533 is a substrate binding site.

This sequence belongs to the FGAMS family. In terms of assembly, monomer. Part of the FGAM synthase complex composed of 1 PurL, 1 PurQ and 2 PurS subunits.

It is found in the cytoplasm. The enzyme catalyses N(2)-formyl-N(1)-(5-phospho-beta-D-ribosyl)glycinamide + L-glutamine + ATP + H2O = 2-formamido-N(1)-(5-O-phospho-beta-D-ribosyl)acetamidine + L-glutamate + ADP + phosphate + H(+). The protein operates within purine metabolism; IMP biosynthesis via de novo pathway; 5-amino-1-(5-phospho-D-ribosyl)imidazole from N(2)-formyl-N(1)-(5-phospho-D-ribosyl)glycinamide: step 1/2. Functionally, part of the phosphoribosylformylglycinamidine synthase complex involved in the purines biosynthetic pathway. Catalyzes the ATP-dependent conversion of formylglycinamide ribonucleotide (FGAR) and glutamine to yield formylglycinamidine ribonucleotide (FGAM) and glutamate. The FGAM synthase complex is composed of three subunits. PurQ produces an ammonia molecule by converting glutamine to glutamate. PurL transfers the ammonia molecule to FGAR to form FGAM in an ATP-dependent manner. PurS interacts with PurQ and PurL and is thought to assist in the transfer of the ammonia molecule from PurQ to PurL. The polypeptide is Phosphoribosylformylglycinamidine synthase subunit PurL (Methylocella silvestris (strain DSM 15510 / CIP 108128 / LMG 27833 / NCIMB 13906 / BL2)).